The sequence spans 388 residues: Glutamine transporter 2 (388 aa).

Helical transmembrane passes span 5 to 27 (LFGS…IPMV), 31 to 53 (FGLF…AALL), 86 to 106 (LFYL…ADLI), 121 to 141 (FAQV…TQII), 147 to 167 (LLFF…IPGM), 186 to 206 (TSTI…LVAY), 218 to 238 (MVIL…YAVV), 268 to 288 (IILS…VAMA), 302 to 322 (IVTY…AADQ), 326 to 346 (VLGY…LAMV), and 368 to 388 (GGKL…ISQI).

This sequence belongs to the amino acid/polyamine transporter 2 family.

The protein resides in the cell inner membrane. In terms of biological role, seems to be involved in glutamine transport. Complements an E.coli glnP deletion mutant. The sequence is that of Glutamine transporter 2 from Aliivibrio fischeri (strain ATCC 700601 / ES114) (Vibrio fischeri).